The chain runs to 557 residues: Cytochrome P450 734A2 (557 aa).

A helical transmembrane segment spans residues 13–35 (WATWRVAAVAAAAAVWVTMHVAA). C495 is a heme binding site.

The protein belongs to the cytochrome P450 family. Heme is required as a cofactor. Expressed in roots, shoot apex, leaf sheaths and leaf blades.

The protein localises to the membrane. Its function is as follows. Cytochrome P450 involved in brassinosteroids (BRs) inactivation and regulation of BRs homeostasis. Is a multifunctional and multisubstrate enzyme that controls the endogenous bioactive BR content both by direct inactivation of castasterone (CS) and by decreasing the levels of BR precursors. Catalyzes the oxidation of carbon 22 hydroxylated BR intermediates to produce C26 oxidized metabolites. This is Cytochrome P450 734A2 (CYP734A2) from Oryza sativa subsp. japonica (Rice).